The primary structure comprises 431 residues: Ornithine decarboxylase (431 aa).

The residue at position 94 (lysine 94) is an N6-(pyridoxal phosphate)lysine. Residues serine 226, glycine 264, and 297–300 each bind pyridoxal 5'-phosphate; that span reads EPGR. A substrate-binding site is contributed by 340 to 341; the sequence is YD. Cysteine 376 (proton donor; shared with dimeric partner) is an active-site residue. Aspartate 377 serves as a coordination point for substrate. Tyrosine 405 contributes to the pyridoxal 5'-phosphate binding site.

Belongs to the Orn/Lys/Arg decarboxylase class-II family. Homodimer. Only the dimer is catalytically active, as the active sites are constructed of residues from both monomers. It depends on pyridoxal 5'-phosphate as a cofactor.

It carries out the reaction L-ornithine + H(+) = putrescine + CO2. It participates in amine and polyamine biosynthesis; putrescine biosynthesis via L-ornithine pathway; putrescine from L-ornithine: step 1/1. Inhibited by antizyme (AZ) in response to polyamine levels. AZ inhibits the assembly of the functional homodimer by binding to ODC monomers and targeting them for ubiquitin-independent proteolytic destruction by the 26S proteasome. Catalyzes the first and rate-limiting step of polyamine biosynthesis that converts ornithine into putrescine, which is the precursor for the polyamines, spermidine and spermine. Polyamines are essential for cell proliferation and are implicated in cellular processes, ranging from DNA replication to apoptosis. The polypeptide is Ornithine decarboxylase (Datura stramonium (Jimsonweed)).